The primary structure comprises 492 residues: Catalase isozyme 1 (492 aa).

Residues His-65 and Asn-138 contribute to the active site. Tyr-348 provides a ligand contact to heme.

The protein belongs to the catalase family. Homotetramer. Heme serves as cofactor. In terms of tissue distribution, in whole endosperms (aleurones plus starchy endosperm), in isolated aleurones and in developing seeds.

The protein localises to the peroxisome. The protein resides in the glyoxysome. The catalysed reaction is 2 H2O2 = O2 + 2 H2O. In terms of biological role, occurs in almost all aerobically respiring organisms and serves to protect cells from the toxic effects of hydrogen peroxide. This chain is Catalase isozyme 1 (CAT1), found in Hordeum vulgare (Barley).